The sequence spans 136 residues: Histone H3.2 (136 aa).

The disordered stretch occupies residues 1–43 (MARTKQTARKSTGGKAPRKQLATKAARKSAPATGGVKKPHRFR). An N6-methylated lysine modification is found at Lys5. Lys10 carries the N6-acetyllysine; alternate modification. Position 10 is an N6-methylated lysine; alternate (Lys10). Ser11 bears the Phosphoserine mark. Residue Thr12 is modified to Phosphothreonine. Position 15 is an N6-acetyllysine (Lys15). 2 positions are modified to N6-acetyllysine; alternate: Lys19 and Lys24. Residues Lys19 and Lys24 each carry the N6-methylated lysine; alternate modification. Residue Lys28 is modified to N6-methylated lysine. Residue Ser29 is modified to Phosphoserine. N6-methylated lysine is present on Lys37.

The protein belongs to the histone H3 family. The nucleosome is a histone octamer containing two molecules each of H2A, H2B, H3 and H4 assembled in one H3-H4 heterotetramer and two H2A-H2B heterodimers. The octamer wraps approximately 147 bp of DNA. Post-translationally, acetylation is generally linked to gene activation. Can be acetylated to form H3K9ac, H3K14ac, H3K18ac and H3K23ac. H3K9ac could compete with H3K9me and prevent gene silencing. H3K9ac is restricted to euchromatin. Methylated to form mainly H3K4me, H3K9me, H3K18me, H3K23me, H3K27me and H3K36me. H3K4me1/2/3, H3K9me3, H3K27me3 and H3K36me1/2/3 are typical marks for euchromatin, whereas heterochromatic chromocenters are enriched in H3K9me1/2 and H3K27me1/2. H2BK143ub1 is probably prerequisite for H3K4me. In terms of processing, can be phosphorylated to form H3S10ph, H3T11ph and H3S28ph.

It is found in the nucleus. Its subcellular location is the chromosome. In terms of biological role, core component of nucleosome. Nucleosomes wrap and compact DNA into chromatin, limiting DNA accessibility to the cellular machineries which require DNA as a template. Histones thereby play a central role in transcription regulation, DNA repair, DNA replication and chromosomal stability. DNA accessibility is regulated via a complex set of post-translational modifications of histones, also called histone code, and nucleosome remodeling. This is Histone H3.2 from Encephalartos altensteinii (Altenstein's bread tree).